The sequence spans 420 residues: FLYWCH transcription factor 3 (420 aa).

The span at 87-104 (SSTSPDSQPSSSSSVMSS) shows a compositional bias: low complexity. Disordered stretches follow at residues 87–107 (SSTS…STDE) and 119–138 (KINK…YTPR). A compositionally biased stretch (polar residues) spans 123–134 (AQRQSSPNSSKP). An FLYWCH-type zinc finger spans residues 140–195 (IRERVLFDEHLYVFDKCSYDSKKRFFRCERKNTCPARIHTPFDAERVIHKVQVHNH).

Probable transcription factor. May bind to the promoters of target genes, including micro-RNA genes, in order to repress expression, and acting redundantly with flh-2. This is FLYWCH transcription factor 3 from Caenorhabditis elegans.